The chain runs to 419 residues: Hyaluronan synthase (419 aa).

The next 5 helical transmembrane spans lie at 8 to 28 (LIVL…MYLF), 33 to 53 (VGIY…LSFL), 318 to 338 (IVAL…VAIG), 345 to 365 (AIQL…IVAL), and 376 to 396 (PASF…LQPL).

It belongs to the NodC/HAS family. The cofactor is Mg(2+).

Its subcellular location is the cell membrane. The enzyme catalyses [hyaluronan](n) + UDP-N-acetyl-alpha-D-glucosamine = N-acetyl-beta-D-glucosaminyl-(1-&gt;4)-[hyaluronan](n) + UDP + H(+). The catalysed reaction is N-acetyl-beta-D-glucosaminyl-(1-&gt;4)-[hyaluronan](n) + UDP-alpha-D-glucuronate = [hyaluronan](n+1) + UDP + H(+). Its pathway is glycan biosynthesis; hyaluronan biosynthesis. In terms of biological role, glycosaminoglycan synthesis. The hyaluronic acid capsule is involved in the pathogenicity of group A Streptococci; it may be the major virulence determinant. The chain is Hyaluronan synthase (hasA) from Streptococcus pyogenes serotype M3 (strain ATCC BAA-595 / MGAS315).